Consider the following 612-residue polypeptide: Bifunctional 6(G)-fructosyltransferase/2,1-fructan:2,1-fructan 1-fructosyltransferase (612 aa).

Over 1–24 (MDAQDIESRHPLIGARPRRRALRS) the chain is Cytoplasmic. A helical; Signal-anchor for type II membrane protein transmembrane segment spans residues 25–45 (LSILLAAALLLGLVLFYANGT). Over 46 to 612 (GSGTAVDPVR…NSTYNDFYHF (567 aa)) the chain is Vacuolar. Substrate contacts are provided by residues 82 to 85 (YMND), Gln101, and Trp109. Asp85 is a catalytic residue. The N-linked (GlcNAc...) asparagine glycan is linked to Asn111. Residues 144-145 (WT) and 208-209 (RD) contribute to the substrate site. N-linked (GlcNAc...) asparagine glycosylation is found at Asn216 and Asn230. Glu267 contributes to the substrate binding site. Residue Asn465 is glycosylated (N-linked (GlcNAc...) asparagine). A disulfide bridge connects residues Cys466 and Cys514. 2 N-linked (GlcNAc...) asparagine glycosylation sites follow: Asn586 and Asn603.

It belongs to the glycosyl hydrolase 32 family. Might be processed in two N-terminal and C-terminal proteolytic fragments.

It localises to the vacuole membrane. It catalyses the reaction [1-beta-D-fructofuranosyl-(2-&gt;1)-]m+1 alpha-D-glucopyranoside + [1-beta-D-fructofuranosyl-(2-&gt;1)-]n+1 alpha-D-glucopyranoside = [1-beta-D-fructofuranosyl-(2-&gt;1)-]m alpha-D-glucopyranoside + [1-beta-D-fructofuranosyl-(2-&gt;1)-]n+1 beta-D-fructofuranosyl-(2-&gt;6)-alpha-D-glucopyranoside (m &gt; 0, n &gt;= 0).. It carries out the reaction [beta-D-fructosyl-(2-&gt;1)-]m + [beta-D-fructosyl-(2-&gt;1)-]n = [beta-D-fructosyl-(2-&gt;1)-]m-1 + [beta-D-fructosyl-(2-&gt;1)-]n+1.. In terms of biological role, involved in the synthesis of fructan of the inulin neoseries. Catalyzes a self-transfer between identical oligosaccharides of the 1-kestose series. The chain is Bifunctional 6(G)-fructosyltransferase/2,1-fructan:2,1-fructan 1-fructosyltransferase from Allium cepa (Onion).